The sequence spans 263 residues: Oxidoreductase UcpA (263 aa).

Residue 10–32 (LITGALQGIGEGIARTFARHGAN) participates in NAD(+) binding. Ser141 is a binding site for substrate. Tyr155 serves as the catalytic Proton acceptor.

The protein belongs to the short-chain dehydrogenases/reductases (SDR) family.

This chain is Oxidoreductase UcpA (ucpA), found in Escherichia coli O157:H7.